A 123-amino-acid polypeptide reads, in one-letter code: Large ribosomal subunit protein uL29 (123 aa).

This sequence belongs to the universal ribosomal protein uL29 family. As to quaternary structure, component of the large ribosomal subunit.

The protein resides in the cytoplasm. Its function is as follows. Component of the large ribosomal subunit. The ribosome is a large ribonucleoprotein complex responsible for the synthesis of proteins in the cell. The sequence is that of Large ribosomal subunit protein uL29 (rpl35) from Platichthys flesus (European flounder).